The following is a 554-amino-acid chain: MTSSRKVRPTKHIFVTGGVVSSLGKGLTAASLGQLLIARGLSVTMQKLDPYLNVDPGTMNPFEHGEVFVTEDGAETDLDLGHYERFLDRNLGLNANVTTGKVYSTVIAKERRGEYLGKTVQVIPHITDEIKARILSMGEPDAHGNAPDVVISEVGGTVGDIESQPFLEAARQVRHEIGRENCFFIHCSLVPYLATSGELKTKPTQHSVAELRGIGILPDALVLRCDREVPQGLKDKIAMMCDVDYEGVVSCPDSSSIYNIPDVLYREHLDTFIIRRLGLPFRDVDWSTWHDLLERVNNPRHELTVGIVGKYIDLPDAYLSVVEAVRAAGYANWTRTNIKWITSDDCETPSGAMKALSGLDAIVVPGGFGIRGIEGKIGAITFAREHKIPLLGLCLGLQCTVIEAARQAGLEQASSTEFDPAATQPVIATMEEQKAAVSGEADLGGTMRLGAYPATLEEGSLVAELYGTTEVSERHRHRYEVNNAYRAQIAEGSDLVFSGTSPDGHLVEFVEYPKEVHPYLVATQAHPEYKSRPTHAHPLFYGLVKTALELRVHP.

Residues 1 to 279 (MTSSRKVRPT…DTFIIRRLGL (279 aa)) are amidoligase domain. Position 21 (serine 21) interacts with CTP. UTP is bound at residue serine 21. Residues 22 to 27 (SLGKGL) and aspartate 79 each bind ATP. Residues aspartate 79 and glutamate 153 each contribute to the Mg(2+) site. Residues 160–162 (DIE), 200–205 (KTKPTQ), and lysine 236 each bind CTP. UTP contacts are provided by residues 200–205 (KTKPTQ) and lysine 236. Residues 304 to 553 (TVGIVGKYID…VKTALELRVH (250 aa)) enclose the Glutamine amidotransferase type-1 domain. Glycine 367 is an L-glutamine binding site. Cysteine 394 acts as the Nucleophile; for glutamine hydrolysis in catalysis. L-glutamine-binding positions include 395–398 (LGLQ), glutamate 417, and arginine 478. Active-site residues include histidine 526 and glutamate 528.

This sequence belongs to the CTP synthase family. In terms of assembly, homotetramer.

It catalyses the reaction UTP + L-glutamine + ATP + H2O = CTP + L-glutamate + ADP + phosphate + 2 H(+). It carries out the reaction L-glutamine + H2O = L-glutamate + NH4(+). The enzyme catalyses UTP + NH4(+) + ATP = CTP + ADP + phosphate + 2 H(+). It participates in pyrimidine metabolism; CTP biosynthesis via de novo pathway; CTP from UDP: step 2/2. Its activity is regulated as follows. Allosterically activated by GTP, when glutamine is the substrate; GTP has no effect on the reaction when ammonia is the substrate. The allosteric effector GTP functions by stabilizing the protein conformation that binds the tetrahedral intermediate(s) formed during glutamine hydrolysis. Inhibited by the product CTP, via allosteric rather than competitive inhibition. Functionally, catalyzes the ATP-dependent amination of UTP to CTP with either L-glutamine or ammonia as the source of nitrogen. Regulates intracellular CTP levels through interactions with the four ribonucleotide triphosphates. This chain is CTP synthase, found in Corynebacterium glutamicum (strain R).